Consider the following 467-residue polypeptide: Trigger factor (467 aa).

Positions 174–261 constitute a PPIase FKBP-type domain; sequence SDIAILTFKG…LQDLKTRELP (88 aa). A disordered region spans residues 439-467; that stretch reads PKKALNEKVKSSKPKNTQKKTDKTKKDSP. A compositionally biased stretch (basic and acidic residues) spans 457-467; the sequence is KKTDKTKKDSP.

It belongs to the FKBP-type PPIase family. Tig subfamily.

It localises to the cytoplasm. The enzyme catalyses [protein]-peptidylproline (omega=180) = [protein]-peptidylproline (omega=0). Its function is as follows. Involved in protein export. Acts as a chaperone by maintaining the newly synthesized protein in an open conformation. Functions as a peptidyl-prolyl cis-trans isomerase. The protein is Trigger factor of Prochlorococcus marinus (strain SARG / CCMP1375 / SS120).